The sequence spans 134 residues: Small ribosomal subunit protein uS8c (134 aa).

The protein belongs to the universal ribosomal protein uS8 family. Part of the 30S ribosomal subunit.

It is found in the plastid. The protein resides in the chloroplast. In terms of biological role, one of the primary rRNA binding proteins, it binds directly to 16S rRNA central domain where it helps coordinate assembly of the platform of the 30S subunit. The sequence is that of Small ribosomal subunit protein uS8c (rps8) from Phaseolus vulgaris (Kidney bean).